The sequence spans 303 residues: MNIKIASRNSALALWQTHHIRDLLIAQGHSVEIITMKTKGDVILDTPLAKIGGKGLFTKELENSMLEGSADIAVHSLKDVPTTFPDGLKLACVCSREDVRDAMLSMKYKNLDELPQGAKVGTTSLRRKMQILAHRADLDIISLRGNVNSRIAKLKNGEFDAIILAMAGINRLNLSKEVKFTSAIDTIPAMGQGALGIEAIDKKEILDAIEFLNDEKSVVETTIERDFVHTLNGGCQAPIGINAKLKGDKIEVEAILGLVDGSEILRDSKTYPKLAYKIAGKNFADEFIARGAKELLKRAEEMV.

Cys235 carries the S-(dipyrrolylmethanemethyl)cysteine modification.

The protein belongs to the HMBS family. As to quaternary structure, monomer. The cofactor is dipyrromethane.

The catalysed reaction is 4 porphobilinogen + H2O = hydroxymethylbilane + 4 NH4(+). It participates in porphyrin-containing compound metabolism; protoporphyrin-IX biosynthesis; coproporphyrinogen-III from 5-aminolevulinate: step 2/4. Tetrapolymerization of the monopyrrole PBG into the hydroxymethylbilane pre-uroporphyrinogen in several discrete steps. The polypeptide is Porphobilinogen deaminase (Campylobacter fetus subsp. fetus (strain 82-40)).